The following is a 198-amino-acid chain: Recombination protein RecR (198 aa).

Residues Cys-57–Cys-72 form a C4-type zinc finger. Residues Ser-80–Pro-175 form the Toprim domain.

This sequence belongs to the RecR family.

May play a role in DNA repair. It seems to be involved in an RecBC-independent recombinational process of DNA repair. It may act with RecF and RecO. This Listeria innocua serovar 6a (strain ATCC BAA-680 / CLIP 11262) protein is Recombination protein RecR.